The following is a 327-amino-acid chain: Putative D-threonate 4-phosphate dehydrogenase (327 aa).

Substrate-binding residues include H139 and T140. H169, H213, and H268 together coordinate a divalent metal cation. Substrate contacts are provided by K276, N285, and R294.

This sequence belongs to the PdxA family. PdxA2 subfamily. Homodimer. Requires a divalent metal cation as cofactor.

It catalyses the reaction 4-O-phospho-D-threonate + NAD(+) = dihydroxyacetone phosphate + CO2 + NADH. Catalyzes the NAD-dependent oxidation and subsequent decarboxylation of D-threonate 4-phosphate to produce dihydroxyacetone phosphate (DHAP). The polypeptide is Putative D-threonate 4-phosphate dehydrogenase (Salmonella typhi).